A 104-amino-acid polypeptide reads, in one-letter code: L-rhamnose mutarotase (104 aa).

Tyr18 is a substrate binding site. His22 (proton donor) is an active-site residue. Substrate is bound by residues Tyr41 and 76 to 77; that span reads WW.

This sequence belongs to the rhamnose mutarotase family. Homodimer.

Its subcellular location is the cytoplasm. The catalysed reaction is alpha-L-rhamnose = beta-L-rhamnose. The protein operates within carbohydrate metabolism; L-rhamnose metabolism. Its function is as follows. Involved in the anomeric conversion of L-rhamnose. This is L-rhamnose mutarotase from Escherichia coli O17:K52:H18 (strain UMN026 / ExPEC).